The primary structure comprises 417 residues: Serine hydroxymethyltransferase (417 aa).

Position 54 is an N6-acetyllysine (lysine 54). (6S)-5,6,7,8-tetrahydrofolate-binding positions include leucine 121 and 125 to 127 (GHL). Position 229 is an N6-(pyridoxal phosphate)lysine (lysine 229). 3 positions are modified to N6-acetyllysine: lysine 250, lysine 285, and lysine 354. 355–357 (SPF) is a (6S)-5,6,7,8-tetrahydrofolate binding site. Lysine 375 carries the N6-acetyllysine modification.

This sequence belongs to the SHMT family. As to quaternary structure, homodimer. It depends on pyridoxal 5'-phosphate as a cofactor.

It is found in the cytoplasm. It carries out the reaction (6R)-5,10-methylene-5,6,7,8-tetrahydrofolate + glycine + H2O = (6S)-5,6,7,8-tetrahydrofolate + L-serine. The protein operates within one-carbon metabolism; tetrahydrofolate interconversion. It functions in the pathway amino-acid biosynthesis; glycine biosynthesis; glycine from L-serine: step 1/1. Catalyzes the reversible interconversion of serine and glycine with tetrahydrofolate (THF) serving as the one-carbon carrier. This reaction serves as the major source of one-carbon groups required for the biosynthesis of purines, thymidylate, methionine, and other important biomolecules. Also exhibits THF-independent aldolase activity toward beta-hydroxyamino acids, producing glycine and aldehydes, via a retro-aldol mechanism. In Escherichia coli O17:K52:H18 (strain UMN026 / ExPEC), this protein is Serine hydroxymethyltransferase.